The chain runs to 255 residues: 1-(5-phosphoribosyl)-5-[(5-phosphoribosylamino)methylideneamino] imidazole-4-carboxamide isomerase (255 aa).

D8 acts as the Proton acceptor in catalysis. D129 serves as the catalytic Proton donor.

This sequence belongs to the HisA/HisF family.

It localises to the cytoplasm. It catalyses the reaction 1-(5-phospho-beta-D-ribosyl)-5-[(5-phospho-beta-D-ribosylamino)methylideneamino]imidazole-4-carboxamide = 5-[(5-phospho-1-deoxy-D-ribulos-1-ylimino)methylamino]-1-(5-phospho-beta-D-ribosyl)imidazole-4-carboxamide. The protein operates within amino-acid biosynthesis; L-histidine biosynthesis; L-histidine from 5-phospho-alpha-D-ribose 1-diphosphate: step 4/9. The chain is 1-(5-phosphoribosyl)-5-[(5-phosphoribosylamino)methylideneamino] imidazole-4-carboxamide isomerase from Prochlorococcus marinus (strain AS9601).